Reading from the N-terminus, the 197-residue chain is Putative phosphopantothenoylcysteine decarboxylase (197 aa).

FMN contacts are provided by residues F52 and 102–105 (SANT). N139 is a binding site for substrate. The active-site Proton donor is C174.

The protein belongs to the HFCD (homooligomeric flavin containing Cys decarboxylase) superfamily. In terms of assembly, homotrimer. It depends on FMN as a cofactor.

It catalyses the reaction N-[(R)-4-phosphopantothenoyl]-L-cysteine + H(+) = (R)-4'-phosphopantetheine + CO2. Its pathway is cofactor biosynthesis; coenzyme A biosynthesis; CoA from (R)-pantothenate: step 3/5. Functionally, necessary for the biosynthesis of coenzyme A. Catalyzes the decarboxylation of 4-phosphopantothenoylcysteine to form 4'-phosphopantotheine. This Dictyostelium discoideum (Social amoeba) protein is Putative phosphopantothenoylcysteine decarboxylase (ppcdc).